A 148-amino-acid chain; its full sequence is UPF0260 protein Sfri_1740 (148 aa).

It belongs to the UPF0260 family.

The polypeptide is UPF0260 protein Sfri_1740 (Shewanella frigidimarina (strain NCIMB 400)).